Consider the following 377-residue polypeptide: Chaperone protein DnaJ (377 aa).

One can recognise a J domain in the interval 5-70 (DYYEVLEVSR…EKRTIYDRYG (66 aa)). The CR-type zinc finger occupies 138–215 (GCEKKIDITY…CQGKGYHEET (78 aa)). The Zn(2+) site is built by C151, C154, C167, C170, C189, C192, C203, and C206. CXXCXGXG motif repeat units follow at residues 151–158 (CEECGGTG), 167–174 (CDYCGGQG), 189–196 (CPKCHGEG), and 203–210 (CPSCQGKG).

This sequence belongs to the DnaJ family. As to quaternary structure, homodimer. It depends on Zn(2+) as a cofactor.

It is found in the cytoplasm. Functionally, participates actively in the response to hyperosmotic and heat shock by preventing the aggregation of stress-denatured proteins and by disaggregating proteins, also in an autonomous, DnaK-independent fashion. Unfolded proteins bind initially to DnaJ; upon interaction with the DnaJ-bound protein, DnaK hydrolyzes its bound ATP, resulting in the formation of a stable complex. GrpE releases ADP from DnaK; ATP binding to DnaK triggers the release of the substrate protein, thus completing the reaction cycle. Several rounds of ATP-dependent interactions between DnaJ, DnaK and GrpE are required for fully efficient folding. Also involved, together with DnaK and GrpE, in the DNA replication of plasmids through activation of initiation proteins. The polypeptide is Chaperone protein DnaJ (Sulfurovum sp. (strain NBC37-1)).